A 224-amino-acid polypeptide reads, in one-letter code: Cysteine S-methyltransferase NleE (224 aa).

An interaction with host proteins TAB2, TAB3 and ZRANB3 region spans residues 49 to 52 (GITR). Residues alanine 92, serine 98, arginine 107, glutamine 111, tyrosine 204, and glutamate 208 each coordinate S-adenosyl-L-methionine.

The protein belongs to the NleE/OspZ family. As to quaternary structure, monomer.

The protein resides in the secreted. Its subcellular location is the host nucleus. It carries out the reaction L-cysteinyl-[protein] + S-adenosyl-L-methionine = S-methyl-L-cysteinyl-[protein] + S-adenosyl-L-homocysteine + H(+). Functionally, cysteine methyltransferase effector that inhibits host cell NF-kappa-B activation by preventing nuclear translocation of host protein RELA/p65. Acts by mediating cysteine methylation of host proteins TAB2 and TAB3: methylation of a conserved cysteine residue of the RanBP2-type zinc finger (NZF) of TAB2 and TAB3 disrupts zinc-binding, thereby inactivating the ubiquitin chain-binding activity of TAB2 and TAB3, leading to NF-kappa-B inactivation. Also mediates cysteine methylation of host protein ZRANB3, inactivating its ability to bind ubiquitin chains. The chain is Cysteine S-methyltransferase NleE from Escherichia coli O127:H6 (strain E2348/69 / EPEC).